We begin with the raw amino-acid sequence, 507 residues long: Anthranilate synthase component 1 (507 aa).

S65 contributes to the L-tryptophan binding site. The residue at position 81 (S81) is a Phosphoserine. Residue T223 is modified to Phosphothreonine. P280–L282 is a binding site for L-tryptophan. Chorismate is bound at residue G316–T317. E343 provides a ligand contact to Mg(2+). Chorismate contacts are provided by residues Y431, R452, G466–G468, and G468. E481 contributes to the Mg(2+) binding site.

Belongs to the anthranilate synthase component I family. In terms of assembly, tetramer of two components I and two components II. The cofactor is Mg(2+).

It carries out the reaction chorismate + L-glutamine = anthranilate + pyruvate + L-glutamate + H(+). Its pathway is amino-acid biosynthesis; L-tryptophan biosynthesis; L-tryptophan from chorismate: step 1/5. The protein is Anthranilate synthase component 1 (TRP2) of Saccharomyces cerevisiae (strain ATCC 204508 / S288c) (Baker's yeast).